Reading from the N-terminus, the 353-residue chain is Holliday junction branch migration complex subunit RuvB (353 aa).

The segment at 1–182 is large ATPase domain (RuvB-L); that stretch reads MPERLITPKG…FGIVQRLEFY (182 aa). ATP-binding positions include I21, R22, G63, K66, T67, T68, 129 to 131, R172, Y182, and R219; that span reads EDF. Position 67 (T67) interacts with Mg(2+). The interval 183–253 is small ATPAse domain (RuvB-S); that stretch reads NVQDLTRIVQ…VADRALDLLD (71 aa). Residues 256-353 are head domain (RuvB-H); that stretch reads VQGFDAQDRR…QEEGGGEGKL (98 aa). DNA-binding residues include R292, R311, and R316.

It belongs to the RuvB family. Homohexamer. Forms an RuvA(8)-RuvB(12)-Holliday junction (HJ) complex. HJ DNA is sandwiched between 2 RuvA tetramers; dsDNA enters through RuvA and exits via RuvB. An RuvB hexamer assembles on each DNA strand where it exits the tetramer. Each RuvB hexamer is contacted by two RuvA subunits (via domain III) on 2 adjacent RuvB subunits; this complex drives branch migration. In the full resolvosome a probable DNA-RuvA(4)-RuvB(12)-RuvC(2) complex forms which resolves the HJ.

The protein resides in the cytoplasm. The catalysed reaction is ATP + H2O = ADP + phosphate + H(+). Its function is as follows. The RuvA-RuvB-RuvC complex processes Holliday junction (HJ) DNA during genetic recombination and DNA repair, while the RuvA-RuvB complex plays an important role in the rescue of blocked DNA replication forks via replication fork reversal (RFR). RuvA specifically binds to HJ cruciform DNA, conferring on it an open structure. The RuvB hexamer acts as an ATP-dependent pump, pulling dsDNA into and through the RuvAB complex. RuvB forms 2 homohexamers on either side of HJ DNA bound by 1 or 2 RuvA tetramers; 4 subunits per hexamer contact DNA at a time. Coordinated motions by a converter formed by DNA-disengaged RuvB subunits stimulates ATP hydrolysis and nucleotide exchange. Immobilization of the converter enables RuvB to convert the ATP-contained energy into a lever motion, pulling 2 nucleotides of DNA out of the RuvA tetramer per ATP hydrolyzed, thus driving DNA branch migration. The RuvB motors rotate together with the DNA substrate, which together with the progressing nucleotide cycle form the mechanistic basis for DNA recombination by continuous HJ branch migration. Branch migration allows RuvC to scan DNA until it finds its consensus sequence, where it cleaves and resolves cruciform DNA. This chain is Holliday junction branch migration complex subunit RuvB, found in Thioalkalivibrio sulfidiphilus (strain HL-EbGR7).